The following is a 312-amino-acid chain: Malate dehydrogenase (312 aa).

NAD(+)-binding positions include 7-12 (GAGNVG) and Asp32. Residues Arg82 and Arg88 each contribute to the substrate site. NAD(+)-binding positions include Asn95 and 118 to 120 (VSN). 2 residues coordinate substrate: Asn120 and Arg151. His175 (proton acceptor) is an active-site residue.

This sequence belongs to the LDH/MDH superfamily. MDH type 3 family.

The catalysed reaction is (S)-malate + NAD(+) = oxaloacetate + NADH + H(+). Functionally, catalyzes the reversible oxidation of malate to oxaloacetate. The protein is Malate dehydrogenase of Cytophaga hutchinsonii (strain ATCC 33406 / DSM 1761 / CIP 103989 / NBRC 15051 / NCIMB 9469 / D465).